A 725-amino-acid polypeptide reads, in one-letter code: G-quartet DNA-binding protein TGP1 (725 aa).

Residues 241–258 carry the Nuclear localization signal motif; that stretch reads KKALTDVLQIHEKKERVH. Disordered regions lie at residues 252–284 and 468–614; these read EKKE…LQET and EIHK…GKRG. Over residues 256–277 the composition is skewed to basic residues; sequence RVHKQQNKNKNPRNAHKNHNRQ. Over residues 468–478 the composition is skewed to basic and acidic residues; sequence EIHKIDRERKR. A compositionally biased stretch (low complexity) spans 517–544; the sequence is NKYKNTSVQNNNNNKNQQRSQSQNQRPP. Over residues 545–564 the composition is skewed to basic and acidic residues; sequence RNYDNRQGGENRNNRQRNEN. The segment covering 565 to 593 has biased composition (low complexity); it reads NRNNFNGNGHRVNNQNNQRNRNSSYPRNN.

In terms of processing, the N-terminus is blocked.

Its subcellular location is the nucleus. Functionally, binds specifically to parallel G4-DNA, a four-stranded structure stabilized by tetrads of hydrogen-bonded guanines. In Tetrahymena thermophila, this protein is G-quartet DNA-binding protein TGP1 (TGP1).